A 376-amino-acid polypeptide reads, in one-letter code: Putative glutamate--cysteine ligase 2 (376 aa).

The protein belongs to the glutamate--cysteine ligase type 2 family. YbdK subfamily.

The enzyme catalyses L-cysteine + L-glutamate + ATP = gamma-L-glutamyl-L-cysteine + ADP + phosphate + H(+). Its function is as follows. ATP-dependent carboxylate-amine ligase which exhibits weak glutamate--cysteine ligase activity. In Mycolicibacterium paratuberculosis (strain ATCC BAA-968 / K-10) (Mycobacterium paratuberculosis), this protein is Putative glutamate--cysteine ligase 2.